A 521-amino-acid chain; its full sequence is BAR/IMD domain-containing adapter protein 2 (521 aa).

The 250-residue stretch at 1-250 (MSLSRSEEMH…VQLMQQIASS (250 aa)) folds into the IMD domain. Residues 132–153 (DALDKCQAELKKLRKKSQGSKN) adopt a coiled-coil conformation. Residues serine 262, serine 324, serine 326, and serine 337 each carry the phosphoserine modification. The interval 299–370 (VMNGVAGPDS…TLPRSSSMAA (72 aa)) is disordered. Over residues 321–335 (QPKSLSPPQSQSKLS) the composition is skewed to low complexity. Threonine 341 carries the phosphothreonine modification. Serine 347 carries the post-translational modification Phosphoserine. The span at 349–368 (TPKNSYATTENKTLPRSSSM) shows a compositional bias: polar residues. Position 361 is a phosphothreonine (threonine 361). A phosphoserine mark is found at serine 367, serine 385, serine 396, and serine 455. Residues 375 to 438 (NGRMRVKAIF…PFSYTRVLDS (64 aa)) form the SH3 domain. Positions 445-480 (HMSLQQGKSSSTGNLLDKDDLAVPPPDYGTSSRAFP) are disordered. Polar residues predominate over residues 447 to 458 (SLQQGKSSSTGN).

As to quaternary structure, homodimer. Interacts with CDC42 and RAC1 that have been activated by GTP binding. Interacts with ATN1, ADGRB1, DIAPH1, EPS8, SHANK1, SHANK2, SHANK3, TIAM1, WASF1 and WASF2. Interacts with ENAH after recruitment of CDC42. In terms of processing, phosphorylated on tyrosine residues by INSR in response to insulin treatment.

The protein resides in the cytoplasm. It localises to the membrane. The protein localises to the cell projection. It is found in the filopodium. Its subcellular location is the ruffle. The protein resides in the cytoskeleton. Its function is as follows. Adapter protein that links membrane-bound small G-proteins to cytoplasmic effector proteins. Necessary for CDC42-mediated reorganization of the actin cytoskeleton and for RAC1-mediated membrane ruffling. Involved in the regulation of the actin cytoskeleton by WASF family members and the Arp2/3 complex. Plays a role in neurite growth. Acts syngeristically with ENAH to promote filipodia formation. Plays a role in the reorganization of the actin cytoskeleton in response to bacterial infection. Participates in actin bundling when associated with EPS8, promoting filopodial protrusions. In Cricetulus griseus (Chinese hamster), this protein is BAR/IMD domain-containing adapter protein 2 (BAIAP2).